Here is a 277-residue protein sequence, read N- to C-terminus: MLKMMGQMVITLREGFEAALLVAVLVAYLKRSGRTEEVRFAYYGTIAAIAAGFAIATAVIVAYGGLHGEQKELFEGFASYLAVGVLTYMILWMAGKDVRGEVERRAEAKFKWGIALIAFVFVVREVIETVLFLTPFAIAEFTTTVIGASAGAAVAITLAVLILRFEYRMSLRRFFYATSVLLAFIAAGLLGYGTHEFVEVLEEEGFEHPLFEKAYSLGIDESNPLHHKGLIGGILAVMFGYSASMEWVRLILQLGYLAAMLGLIHRSYGRVTERAEV.

Transmembrane regions (helical) follow at residues 46 to 66 (IAAI…YGGL), 73 to 93 (LFEG…ILWM), 143 to 163 (TTVI…VLIL), 174 to 194 (FFYA…GYGT), and 228 to 248 (KGLI…MEWV).

Belongs to the oxidase-dependent Fe transporter (OFeT) (TC 9.A.10.1) family.

It localises to the cell membrane. This is an uncharacterized protein from Archaeoglobus fulgidus (strain ATCC 49558 / DSM 4304 / JCM 9628 / NBRC 100126 / VC-16).